The sequence spans 325 residues: Aldo-keto reductase family 1 member A1 (325 aa).

Threonine 2 is modified (N-acetylthreonine). Residue serine 4 is modified to Phosphoserine. Residues 11 to 20, threonine 21, and tryptophan 22 each bind NADP(+); that span reads GQKMPLIGLG. The residue at position 38 (serine 38) is a Phosphoserine. An NADP(+)-binding site is contributed by aspartate 45. Tyrosine 50 serves as the catalytic Proton donor. N6-acetyllysine; alternate is present on lysine 127. Residue lysine 127 is modified to N6-succinyllysine; alternate. Residue lysine 145 is modified to N6-succinyllysine. The NADP(+) site is built by serine 162, asparagine 163, serine 211, leucine 213, serine 215, serine 216, lysine 263, serine 264, isoleucine 265, arginine 269, glutamine 272, and asparagine 273. Serine 211 carries the phosphoserine modification.

Belongs to the aldo/keto reductase family. In terms of assembly, monomer. As to expression, widely expressed.

The protein resides in the cytoplasm. Its subcellular location is the cytosol. It is found in the apical cell membrane. It carries out the reaction a primary alcohol + NADP(+) = an aldehyde + NADPH + H(+). The enzyme catalyses L-gulonate + NADP(+) = aldehydo-D-glucuronate + NADPH + H(+). The catalysed reaction is L-gulono-1,4-lactone + NADP(+) = D-glucurono-3,6-lactone + NADPH + H(+). It catalyses the reaction allyl alcohol + NADP(+) = acrolein + NADPH + H(+). It carries out the reaction glycerol + NADP(+) = D-glyceraldehyde + NADPH + H(+). The enzyme catalyses glycerol + NADP(+) = L-glyceraldehyde + NADPH + H(+). The catalysed reaction is hydroxyacetone + NADP(+) = methylglyoxal + NADPH + H(+). It catalyses the reaction 3-deoxyfructose + NADP(+) = 3-deoxyglucosone + NADPH + H(+). It carries out the reaction (R)-mevalonate + NADP(+) = (R)-mevaldate + NADPH + H(+). The enzyme catalyses pyridine 3-methanol + NADP(+) = pyridine-3-carbaldehyde + NADPH + H(+). The catalysed reaction is S-nitroso-CoA + NADPH + H(+) = sulfinamide-CoA + NADP(+). It catalyses the reaction S-nitrosoglutathione + NADPH + H(+) = S-(hydroxysulfenamide)glutathione + NADP(+). In terms of biological role, catalyzes the NADPH-dependent reduction of a wide variety of carbonyl-containing compounds to their corresponding alcohols. Displays enzymatic activity towards endogenous metabolites such as aromatic and aliphatic aldehydes, ketones, monosaccharides and bile acids, with a preference for negatively charged substrates, such as glucuronate and succinic semialdehyde. Plays an important role in ascorbic acid biosynthesis by catalyzing the reduction of D-glucuronic acid and D-glucurono-gamma-lactone. Functions as a detoxifiying enzyme by reducing a range of toxic aldehydes. Reduces methylglyoxal and 3-deoxyglucosone, which are present at elevated levels under hyperglycemic conditions and are cytotoxic. Involved in the detoxification of lipid-derived aldehydes like acrolein. Plays a role in the activation of procarcinogens, such as polycyclic aromatic hydrocarbon trans-dihydrodiols, and in the metabolism of various xenobiotics and drugs. Also acts as an inhibitor of protein S-nitrosylation by mediating degradation of S-nitroso-coenzyme A (S-nitroso-CoA), a cofactor required to S-nitrosylate proteins. S-nitroso-CoA reductase activity is involved in reprogramming intermediary metabolism in renal proximal tubules, notably by inhibiting protein S-nitrosylation of isoform 2 of PKM (PKM2). Also acts as a S-nitroso-glutathione reductase by catalyzing the NADPH-dependent reduction of S-nitrosoglutathione. Displays no reductase activity towards retinoids. The polypeptide is Aldo-keto reductase family 1 member A1 (Mus musculus (Mouse)).